Here is a 316-residue protein sequence, read N- to C-terminus: tRNA dimethylallyltransferase (316 aa).

Residue 17–24 (GPTASGKT) coordinates ATP. 19 to 24 (TASGKT) provides a ligand contact to substrate. Interaction with substrate tRNA stretches follow at residues 42–45 (DSAL), 166–170 (QRLSR), and 247–252 (RCVGYR).

The protein belongs to the IPP transferase family. As to quaternary structure, monomer. Requires Mg(2+) as cofactor.

The enzyme catalyses adenosine(37) in tRNA + dimethylallyl diphosphate = N(6)-dimethylallyladenosine(37) in tRNA + diphosphate. Its function is as follows. Catalyzes the transfer of a dimethylallyl group onto the adenine at position 37 in tRNAs that read codons beginning with uridine, leading to the formation of N6-(dimethylallyl)adenosine (i(6)A). This Citrobacter koseri (strain ATCC BAA-895 / CDC 4225-83 / SGSC4696) protein is tRNA dimethylallyltransferase.